The primary structure comprises 235 residues: Transmembrane protein 215 (235 aa).

Helical transmembrane passes span 12–32 (LVVA…VSGM) and 40–60 (IPLL…IALA). A disordered region spans residues 99-145 (SDLESGKGSSDELAKKAGLRGKPPPQSQGEVSVASSINSPTPTEEGE). Polar residues predominate over residues 125–140 (SQGEVSVASSINSPTP).

It localises to the membrane. This Homo sapiens (Human) protein is Transmembrane protein 215 (TMEM215).